The chain runs to 1086 residues: Rh5-interacting protein (1086 aa).

An N-terminal signal peptide occupies residues 1-19 (MFRIFFTLLIIILIKKTSA). N-linked (GlcNAc...) asparagine glycosylation is found at Asn-103, Asn-144, Asn-228, Asn-303, Asn-334, Asn-480, Asn-498, Asn-506, Asn-526, and Asn-646. 2 consecutive EGF-like domains span residues 287–321 (RCTQ…NNCE) and 325–362 (LCTV…NKCY). EGF-like domains are found at residues 636–675 (SCSN…KLCE), 679–715 (DCES…GKCV), 719–753 (KCDL…GVCI), 818–854 (YCKD…GECI), 858–897 (SCLI…GKCV), 901–938 (KCVH…GVCL), and 942–979 (PCLK…DSCV). 2 N-linked (GlcNAc...) asparagine glycosylation sites follow: Asn-964 and Asn-1021.

In terms of assembly, component of the PfRH5 adhesion complex composed of 1 copy of CyRPA, RH5 and RIPR; the complex is formed during merozoite invasion of host erythrocytes specifically at the interface between the parasite and host membranes. Within the complex, interacts with CyRPA. CyRPA recruitment of RIPR to RH5-P113-BSG leads to the formation of the PfRH5 adhesion complex which probably in turn releases RH5 from P113 while maintaining the interaction of the PfRH5 adhesion complex with BSG. Proteolytically cleaved into two chains of 125kDa and 65kDa which remain associated. The cleavage occurs at the schizont stage prior to the release of merozoites. Post-translationally, contains disulfide bonds.

It localises to the secreted. The protein resides in the cytoplasmic vesicle. It is found in the secretory vesicle. Its subcellular location is the microneme lumen. The protein localises to the cell membrane. It localises to the host cell membrane. Functionally, essential for the invasion of host erythrocytes by blood stage merozoites. As part of the PfRH5 adhesion complex, facilitates the interaction of RH5 and human BSG required for the Ca(2+) release into the erythrocyte. This Plasmodium falciparum (isolate 3D7) protein is Rh5-interacting protein (RIPR).